The primary structure comprises 262 residues: MRSSFIFALLLIGAALAHPATDPIRSKRAVEVVEDDFSGEASGEASGEASGEFSGEGSGEGSGELSPEVEVTPLTISQLETLNNYAQQVQAEAQKLIHQANFVITEMTALAANAQNLGIMSSIVSTNSQIVLDSARLSLNETETETGNTTTVAPPTTCSTSAVCYSDEGCGSGKCIGALAGTCNCNSCVYGWPCQEDSACGGFIGACNTITATCDCFNAYAKHNMTLTDAFTNFCNVAKCNGGEDNVENCHGLPCNYGFCVC.

The N-terminal stretch at 1–17 (MRSSFIFALLLIGAALA) is a signal peptide. Positions 37 to 68 (FSGEASGEASGEASGEFSGEGSGEGSGELSPE) are disordered. A compositionally biased stretch (low complexity) spans 39-53 (GEASGEASGEASGEF). Residues asparagine 140, asparagine 148, and asparagine 224 are each glycosylated (N-linked (GlcNAc...) asparagine).

The sequence is that of Chondroitin proteoglycan 3 (cpg-3) from Caenorhabditis briggsae.